The primary structure comprises 302 residues: Urease accessory protein UreD 1 (302 aa).

This sequence belongs to the UreD family. As to quaternary structure, ureD, UreF and UreG form a complex that acts as a GTP-hydrolysis-dependent molecular chaperone, activating the urease apoprotein by helping to assemble the nickel containing metallocenter of UreC. The UreE protein probably delivers the nickel.

It is found in the cytoplasm. Required for maturation of urease via the functional incorporation of the urease nickel metallocenter. The protein is Urease accessory protein UreD 1 of Psychrobacter cryohalolentis (strain ATCC BAA-1226 / DSM 17306 / VKM B-2378 / K5).